The primary structure comprises 731 residues: Putative pentatricopeptide repeat-containing protein At1g17630 (731 aa).

15 PPR repeats span residues 88–118 (SGSL…VSLV), 122–156 (DLRL…GLTG), 157–191 (DGYI…GLKE), 192–222 (NLHV…MPVR), 223–257 (NRMS…EFKP), 258–292 (DEVT…GNAV), 293–327 (SGEA…GFEE), 328–358 (YLPS…IRNK), 359–393 (GIES…NHVC), 398–432 (NVVT…KVLA), 433–467 (NSVT…SMSE), 468–498 (NILV…IRDK), 499–533 (DLIS…GFHP), 534–569 (DGIA…GLEP), and 570–600 (QQEH…MPME). The tract at residues 605–680 (VLGALLNSCR…VSGSSWIEVK (76 aa)) is type E motif. Positions 681–711 (KKKYKFSSGSIVQSEFETIYPVLEDLVSHML) are type E(+) motif.

The protein belongs to the PPR family. PCMP-E subfamily.

This Arabidopsis thaliana (Mouse-ear cress) protein is Putative pentatricopeptide repeat-containing protein At1g17630 (PCMP-E72).